Here is a 953-residue protein sequence, read N- to C-terminus: Ubiquitin carboxyl-terminal hydrolase CYLD (953 aa).

Residues 106–590 (CEERLSLFRN…LEIMIGKKKG (485 aa)) form an interaction with TRIP region. CAP-Gly domains follow at residues 153 to 198 (LAER…VFVA) and 253 to 286 (DVLP…VQLC). Residues 318-350 (FMSRGVGDKGSSSHNKPKVTGSTSDPGSRNRSE) are disordered. The segment covering 327 to 346 (GSSSHNKPKVTGSTSDPGSR) has biased composition (polar residues). S384 carries the post-translational modification Phosphoserine. Positions 387–410 (EMSSDFGHSSPPPQPPSMNSLSSE) are disordered. The tract at residues 391 to 466 (DFGHSSPPPQ…MPSSSGNAHG (76 aa)) is interaction with TRAF2. Residues S415 and S419 each carry the phosphoserine modification. The interaction with IKBKG/NEMO stretch occupies residues 467–681 (LEVGSLAEVK…FTSEEKDPEE (215 aa)). The CAP-Gly 3 domain maps to 489 to 532 (GQPPGLSDVLAGLELEDECAGCTDGTFRGTRYFTCALKKALFVK). Residues 589–947 (KGIQGHYNSC…DAYMCMYQSP (359 aa)) form the USP domain. The active-site Nucleophile is C598. The B-box stretch occupies residues 778–830 (LEDTPRQCRICGGLAMYECRECYDDPDISAGKIKQFCKTCSTQVHLHPRRLNH). Residues C785, C788, C796, C799, C814, C817, H822, and H830 each contribute to the Zn(2+) site. Residue H868 is the Proton acceptor of the active site.

The protein belongs to the peptidase C19 family. Interacts (via CAP-Gly domain) with IKBKG/NEMO (via proline-rich C-terminal region). Interacts with TRAF2 and TRIP. Interacts with PLK1, DVL1, DVL3, MAVS, TBK1, IKKE and RIGI. Interacts (via CAP-Gly domain) with microtubules. Interacts with HDAC6 and BCL3. Interacts with MAP3K7. Identified in a complex with TRAF6 and SQSTM1. Interacts with OPTN and SQSTM1. Interacts with CEP350. Interacts with RNF31; the interaction is indirect and is mediated via SPATA2. Interacts with SPATA2 (via the PUB domain); the interaction is direct and recruits CYLD to the LUBAC complex, thereby regulating TNF-alpha-induced necroptosis. In terms of processing, phosphorylated on several serine residues by IKKA and/or IKKB in response to immune stimuli. Phosphorylation requires IKBKG. Phosphorylation abolishes TRAF2 deubiquitination, interferes with the activation of Jun kinases, and strongly reduces CD40-dependent gene activation by NF-kappa-B. Post-translationally, ubiquitinated. Polyubiquitinated in hepatocytes treated with palmitic acid. Ubiquitination is mediated by E3 ligase TRIM47 and leads to proteasomal degradation.

The protein resides in the cytoplasm. Its subcellular location is the perinuclear region. The protein localises to the cytoskeleton. It localises to the cell membrane. It is found in the microtubule organizing center. The protein resides in the centrosome. Its subcellular location is the spindle. The protein localises to the cilium basal body. It catalyses the reaction Thiol-dependent hydrolysis of ester, thioester, amide, peptide and isopeptide bonds formed by the C-terminal Gly of ubiquitin (a 76-residue protein attached to proteins as an intracellular targeting signal).. In terms of biological role, deubiquitinase that specifically cleaves 'Lys-63'- and linear 'Met-1'-linked polyubiquitin chains and is involved in NF-kappa-B activation and TNF-alpha-induced necroptosis. Negatively regulates NF-kappa-B activation by deubiquitinating upstream signaling factors. Contributes to the regulation of cell survival, proliferation and differentiation via its effects on NF-kappa-B activation. Negative regulator of Wnt signaling. Inhibits HDAC6 and thereby promotes acetylation of alpha-tubulin and stabilization of microtubules. Plays a role in the regulation of microtubule dynamics, and thereby contributes to the regulation of cell proliferation, cell polarization, cell migration, and angiogenesis. Required for normal cell cycle progress and normal cytokinesis. Inhibits nuclear translocation of NF-kappa-B. Plays a role in the regulation of inflammation and the innate immune response, via its effects on NF-kappa-B activation. Dispensable for the maturation of intrathymic natural killer cells, but required for the continued survival of immature natural killer cells. Negatively regulates TNFRSF11A signaling and osteoclastogenesis. Involved in the regulation of ciliogenesis, allowing ciliary basal bodies to migrate and dock to the plasma membrane; this process does not depend on NF-kappa-B activation. Ability to remove linear ('Met-1'-linked) polyubiquitin chains regulates innate immunity and TNF-alpha-induced necroptosis: recruited to the LUBAC complex via interaction with SPATA2 and restricts linear polyubiquitin formation on target proteins. Regulates innate immunity by restricting linear polyubiquitin formation on RIPK2 in response to NOD2 stimulation. Involved in TNF-alpha-induced necroptosis by removing linear ('Met-1'-linked) polyubiquitin chains from RIPK1, thereby regulating the kinase activity of RIPK1. Negatively regulates intestinal inflammation by removing 'Lys-63' linked polyubiquitin chain of NLRP6, thereby reducing the interaction between NLRP6 and PYCARD/ASC and formation of the NLRP6 inflammasome. Does not catalyze deubiquitination of heterotypic 'Lys-63'-/'Lys-48'-linked branched ubiquitin chains. Removes 'Lys-63' linked polyubiquitin chain of MAP3K7, which inhibits phosphorylation and blocks downstream activation of the JNK-p38 kinase cascades. Also removes 'Lys-63'-linked polyubiquitin chains of MAP3K1 and MA3P3K3, which inhibit their interaction with MAP2K1 and MAP2K2. The chain is Ubiquitin carboxyl-terminal hydrolase CYLD (Cyld) from Rattus norvegicus (Rat).